The primary structure comprises 285 residues: NADPH-dependent 7-cyano-7-deazaguanine reductase (285 aa).

91–93 (IES) is a substrate binding site. 93–94 (SK) is a binding site for NADPH. C191 functions as the Thioimide intermediate in the catalytic mechanism. D198 functions as the Proton donor in the catalytic mechanism. 230-231 (HE) provides a ligand contact to substrate. 259–260 (RG) lines the NADPH pocket.

It belongs to the GTP cyclohydrolase I family. QueF type 2 subfamily. In terms of assembly, homodimer.

It localises to the cytoplasm. It catalyses the reaction 7-aminomethyl-7-carbaguanine + 2 NADP(+) = 7-cyano-7-deazaguanine + 2 NADPH + 3 H(+). It functions in the pathway tRNA modification; tRNA-queuosine biosynthesis. Its function is as follows. Catalyzes the NADPH-dependent reduction of 7-cyano-7-deazaguanine (preQ0) to 7-aminomethyl-7-deazaguanine (preQ1). The chain is NADPH-dependent 7-cyano-7-deazaguanine reductase from Legionella pneumophila (strain Paris).